The chain runs to 1198 residues: DNA polymerase II large subunit (1198 aa).

2 disordered regions span residues 281 to 332 (YKTG…PQKK) and 534 to 553 (HWAETDGAQQTRPPDGAAES). Residues 286-319 (DTDEADADSDDGTDEDAADDSDIDDSSAGDEEAD) show a composition bias toward acidic residues.

This sequence belongs to the archaeal DNA polymerase II family. Heterodimer of a large subunit and a small subunit.

It catalyses the reaction DNA(n) + a 2'-deoxyribonucleoside 5'-triphosphate = DNA(n+1) + diphosphate. It carries out the reaction Exonucleolytic cleavage in the 3'- to 5'-direction to yield nucleoside 5'-phosphates.. Possesses two activities: a DNA synthesis (polymerase) and an exonucleolytic activity that degrades single-stranded DNA in the 3'- to 5'-direction. Has a template-primer preference which is characteristic of a replicative DNA polymerase. This chain is DNA polymerase II large subunit, found in Natronomonas pharaonis (strain ATCC 35678 / DSM 2160 / CIP 103997 / JCM 8858 / NBRC 14720 / NCIMB 2260 / Gabara) (Halobacterium pharaonis).